The following is a 64-amino-acid chain: uncharacterized protein (64 aa).

The tract at residues Met-1–Tyr-64 is disordered. The span at Pro-8–Asn-32 shows a compositional bias: low complexity.

This is an uncharacterized protein from Dictyostelium discoideum (Social amoeba).